The following is a 163-amino-acid chain: Lipoprotein signal peptidase (163 aa).

The next 3 helical transmembrane spans lie at 7–27, 64–84, and 99–119; these read LSFL…KYLV, WQKY…VYLL, and ALII…GFVV. Residues D120 and D138 contribute to the active site. The chain crosses the membrane as a helical span at residues 133–153; that stretch reads VFNVADIAICVGVGLLILDSF.

This sequence belongs to the peptidase A8 family.

It is found in the cell inner membrane. It carries out the reaction Release of signal peptides from bacterial membrane prolipoproteins. Hydrolyzes -Xaa-Yaa-Zaa-|-(S,diacylglyceryl)Cys-, in which Xaa is hydrophobic (preferably Leu), and Yaa (Ala or Ser) and Zaa (Gly or Ala) have small, neutral side chains.. It functions in the pathway protein modification; lipoprotein biosynthesis (signal peptide cleavage). This protein specifically catalyzes the removal of signal peptides from prolipoproteins. The chain is Lipoprotein signal peptidase from Actinobacillus succinogenes (strain ATCC 55618 / DSM 22257 / CCUG 43843 / 130Z).